The following is a 139-amino-acid chain: Nucleoside diphosphate kinase (139 aa).

ATP-binding residues include Lys11, Phe59, Arg87, Thr93, Arg104, and Asn114. The active-site Pros-phosphohistidine intermediate is His117.

It belongs to the NDK family. In terms of assembly, homotetramer. Requires Mg(2+) as cofactor.

The protein localises to the cytoplasm. The catalysed reaction is a 2'-deoxyribonucleoside 5'-diphosphate + ATP = a 2'-deoxyribonucleoside 5'-triphosphate + ADP. It carries out the reaction a ribonucleoside 5'-diphosphate + ATP = a ribonucleoside 5'-triphosphate + ADP. Major role in the synthesis of nucleoside triphosphates other than ATP. The ATP gamma phosphate is transferred to the NDP beta phosphate via a ping-pong mechanism, using a phosphorylated active-site intermediate. This Wolbachia sp. subsp. Drosophila simulans (strain wRi) protein is Nucleoside diphosphate kinase.